Reading from the N-terminus, the 457-residue chain is tRNA-2-methylthio-N(6)-dimethylallyladenosine synthase (457 aa).

In terms of domain architecture, MTTase N-terminal spans 3-120 (KKVYVKTFGC…LPQMIDARRT (118 aa)). 6 residues coordinate [4Fe-4S] cluster: C12, C49, C83, C157, C161, and C164. In terms of domain architecture, Radical SAM core spans 143 to 377 (RVEGPTAFVS…QATIEENVAR (235 aa)). In terms of domain architecture, TRAM spans 380-447 (QSMVGKVERI…PHSLRGELVL (68 aa)).

Belongs to the methylthiotransferase family. MiaB subfamily. Monomer. The cofactor is [4Fe-4S] cluster.

Its subcellular location is the cytoplasm. The enzyme catalyses N(6)-dimethylallyladenosine(37) in tRNA + (sulfur carrier)-SH + AH2 + 2 S-adenosyl-L-methionine = 2-methylsulfanyl-N(6)-dimethylallyladenosine(37) in tRNA + (sulfur carrier)-H + 5'-deoxyadenosine + L-methionine + A + S-adenosyl-L-homocysteine + 2 H(+). In terms of biological role, catalyzes the methylthiolation of N6-(dimethylallyl)adenosine (i(6)A), leading to the formation of 2-methylthio-N6-(dimethylallyl)adenosine (ms(2)i(6)A) at position 37 in tRNAs that read codons beginning with uridine. The protein is tRNA-2-methylthio-N(6)-dimethylallyladenosine synthase of Burkholderia multivorans (strain ATCC 17616 / 249).